Consider the following 810-residue polypeptide: RING finger protein unkempt homolog (810 aa).

The disordered stretch occupies residues 1 to 24; the sequence is MSKGPGPGGSAASSAPPAATAQVL. Residues 10–19 show a composition bias toward low complexity; it reads SAASSAPPAA. C3H1-type zinc fingers lie at residues 84–113, 124–154, 215–241, 251–285, and 293–321; these read YSPD…HRTT, YYKT…HGPH, NYKT…HNSK, KYRS…HTRT, and IYKS…HVEQ. The segment at 239 to 265 is disordered; sequence NSKDRRRSPRKHKYRSSPCPNVKHGDE. Serine 240 is modified (phosphoserine). The span at 241–253 shows a compositional bias: basic residues; it reads KDRRRSPRKHKYR. Residues 324–343 are disordered; it reads LSDDLQPSSAVSSPTQPGPV. Positions 328-338 are enriched in polar residues; that stretch reads LQPSSAVSSPT. Phosphoserine occurs at positions 374, 378, 385, and 631. A coiled-coil region spans residues 643 to 723; sequence GAAELARLRQ…QEELERLHAG (81 aa). The RING-type; degenerate zinc finger occupies 766-801; it reads SVKCLKCQEQKRAVLPCQHAALCELCAEGSECPICQ.

It belongs to the unkempt family.

It is found in the cytoplasm. In terms of biological role, sequence-specific RNA-binding protein which plays an important role in the establishment and maintenance of the early morphology of cortical neurons during embryonic development. Acts as a translation repressor and controls a translationally regulated cell morphology program to ensure proper structuring of the nervous system. Translational control depends on recognition of its binding element within target mRNAs which consists of a mandatory UAG trimer upstream of a U/A-rich motif. Associated with polysomes. The chain is RING finger protein unkempt homolog (UNK) from Homo sapiens (Human).